The chain runs to 214 residues: Probable nicotinate-nucleotide adenylyltransferase (214 aa).

It belongs to the NadD family.

The enzyme catalyses nicotinate beta-D-ribonucleotide + ATP + H(+) = deamido-NAD(+) + diphosphate. The protein operates within cofactor biosynthesis; NAD(+) biosynthesis; deamido-NAD(+) from nicotinate D-ribonucleotide: step 1/1. Catalyzes the reversible adenylation of nicotinate mononucleotide (NaMN) to nicotinic acid adenine dinucleotide (NaAD). This is Probable nicotinate-nucleotide adenylyltransferase from Thermomicrobium roseum (strain ATCC 27502 / DSM 5159 / P-2).